The primary structure comprises 621 residues: uncharacterized protein (621 aa).

Low complexity-rich tracts occupy residues 1-10 (MIEDNINNNE), 63-79 (TEPL…TTPS), 137-182 (NNNN…NNFN), and 309-347 (NQSI…NNNN). Disordered stretches follow at residues 1–29 (MIED…DKNN), 63–100 (TEPL…SNKT), 135–194 (DDNN…KDND), 307–374 (KTNQ…EDDT), 430–471 (YNNN…IAKR), 492–539 (KQSQ…IKII), and 594–614 (PTQI…SPSK). Residues 348–357 (STLTSSNSLS) are compositionally biased toward polar residues. Low complexity-rich tracts occupy residues 431-459 (NNNN…NNNN), 496-539 (NNNN…IKII), and 597-613 (INSN…SSPS).

This is an uncharacterized protein from Dictyostelium discoideum (Social amoeba).